We begin with the raw amino-acid sequence, 57 residues long: Large ribosomal subunit protein bL32c (57 aa).

It belongs to the bacterial ribosomal protein bL32 family.

The protein resides in the plastid. The protein localises to the chloroplast. The protein is Large ribosomal subunit protein bL32c of Acorus calamus (Sweet flag).